The primary structure comprises 306 residues: Bifunctional protein FolD 2 (306 aa).

NADP(+)-binding positions include 169–171 (GHS) and Ile-235.

The protein belongs to the tetrahydrofolate dehydrogenase/cyclohydrolase family. In terms of assembly, homodimer.

It carries out the reaction (6R)-5,10-methylene-5,6,7,8-tetrahydrofolate + NADP(+) = (6R)-5,10-methenyltetrahydrofolate + NADPH. The enzyme catalyses (6R)-5,10-methenyltetrahydrofolate + H2O = (6R)-10-formyltetrahydrofolate + H(+). The protein operates within one-carbon metabolism; tetrahydrofolate interconversion. Functionally, catalyzes the oxidation of 5,10-methylenetetrahydrofolate to 5,10-methenyltetrahydrofolate and then the hydrolysis of 5,10-methenyltetrahydrofolate to 10-formyltetrahydrofolate. This chain is Bifunctional protein FolD 2, found in Mesorhizobium japonicum (strain LMG 29417 / CECT 9101 / MAFF 303099) (Mesorhizobium loti (strain MAFF 303099)).